The sequence spans 669 residues: DNA mismatch repair protein MutL (669 aa).

The interval F356 to S377 is disordered. A compositionally biased stretch (polar residues) spans N361–S377.

Belongs to the DNA mismatch repair MutL/HexB family.

This protein is involved in the repair of mismatches in DNA. It is required for dam-dependent methyl-directed DNA mismatch repair. May act as a 'molecular matchmaker', a protein that promotes the formation of a stable complex between two or more DNA-binding proteins in an ATP-dependent manner without itself being part of a final effector complex. The chain is DNA mismatch repair protein MutL from Staphylococcus aureus (strain MSSA476).